The primary structure comprises 98 residues: NADH-ubiquinone oxidoreductase chain 4L (98 aa).

Helical transmembrane passes span 1-21, 27-47, and 61-81; these read MIPTYMNIMLAFTISLLGMLT, VASLLCLEGMTMSLFIMTALI, and IILLVFAACEAAVGLALLISI.

It belongs to the complex I subunit 4L family. In terms of assembly, core subunit of respiratory chain NADH dehydrogenase (Complex I) which is composed of 45 different subunits.

It localises to the mitochondrion inner membrane. The catalysed reaction is a ubiquinone + NADH + 5 H(+)(in) = a ubiquinol + NAD(+) + 4 H(+)(out). Functionally, core subunit of the mitochondrial membrane respiratory chain NADH dehydrogenase (Complex I) which catalyzes electron transfer from NADH through the respiratory chain, using ubiquinone as an electron acceptor. Part of the enzyme membrane arm which is embedded in the lipid bilayer and involved in proton translocation. This Macaca sylvanus (Barbary macaque) protein is NADH-ubiquinone oxidoreductase chain 4L (MT-ND4L).